The primary structure comprises 670 residues: Lebercilin-like protein (670 aa).

A disordered region spans residues 24–44 (RRSAECKRSPGTGDFSRNSNA). Coiled-coil stretches lie at residues 148-259 (LHKI…EREE) and 305-336 (AAQT…IKNI). Residues 351–402 (YPKVSSTKSVQADRKSLPFTSMRHQGTQKSDVAPLTTKGKKATGNMDRKEKS) are disordered. Residues 368–380 (PFTSMRHQGTQKS) are compositionally biased toward polar residues. Residues 420 to 440 (EDSKTKYEDLSREEKHLEVQV) adopt a coiled-coil conformation. 3 disordered regions span residues 495-520 (RSMQ…PLRQ), 533-594 (LHHG…FRDK), and 606-647 (GYVL…AFGD). Polar residues predominate over residues 546–558 (AGNTKYSHSTSKH). 3 stretches are compositionally biased toward basic and acidic residues: residues 560-572 (SNRE…HSDS), 585-594 (KAKDTTFRDK), and 621-632 (GSEEPLQSKESH). Residues 637 to 647 (SQASASNAFGD) are compositionally biased toward polar residues.

This sequence belongs to the LCA5 family.

The sequence is that of Lebercilin-like protein from Papio anubis (Olive baboon).